Consider the following 128-residue polypeptide: Gene 39 protein (128 aa).

The chain is Gene 39 protein (39) from Mycobacterium (Mycobacteriophage D29).